A 1198-amino-acid chain; its full sequence is Integrator complex subunit 2 (1198 aa).

Residues 421-437 (FVSLSFCMLLAFSTLVS) form a helical membrane-spanning segment.

It belongs to the Integrator subunit 2 family. Component of the Integrator complex, composed of core subunits INTS1, INTS2, INTS3, INTS4, INTS5, INTS6, INTS7, INTS8, INTS9/RC74, INTS10, INTS11/CPSF3L, INTS12, INTS13, INTS14 and INTS15. The core complex associates with protein phosphatase 2A subunits PPP2CA and PPP2R1A, to form the Integrator-PP2A (INTAC) complex.

The protein resides in the nucleus. It localises to the nucleus membrane. It is found in the cytoplasm. In terms of biological role, component of the integrator complex, a multiprotein complex that terminates RNA polymerase II (Pol II) transcription in the promoter-proximal region of genes. The integrator complex provides a quality checkpoint during transcription elongation by driving premature transcription termination of transcripts that are unfavorably configured for transcriptional elongation: the complex terminates transcription by (1) catalyzing dephosphorylation of the C-terminal domain (CTD) of Pol II subunit POLR2A/RPB1 and SUPT5H/SPT5, (2) degrading the exiting nascent RNA transcript via endonuclease activity and (3) promoting the release of Pol II from bound DNA. The integrator complex is also involved in terminating the synthesis of non-coding Pol II transcripts, such as enhancer RNAs (eRNAs), small nuclear RNAs (snRNAs), telomerase RNAs and long non-coding RNAs (lncRNAs). Mediates recruitment of cytoplasmic dynein to the nuclear envelope, probably as component of the integrator complex. The sequence is that of Integrator complex subunit 2 (Ints2) from Mus musculus (Mouse).